A 178-amino-acid polypeptide reads, in one-letter code: UPF0228 protein MA_4223 (178 aa).

This sequence belongs to the UPF0228 family.

This is UPF0228 protein MA_4223 from Methanosarcina acetivorans (strain ATCC 35395 / DSM 2834 / JCM 12185 / C2A).